The sequence spans 195 residues: Imidazoleglycerol-phosphate dehydratase (195 aa).

The protein belongs to the imidazoleglycerol-phosphate dehydratase family.

The protein resides in the cytoplasm. It catalyses the reaction D-erythro-1-(imidazol-4-yl)glycerol 3-phosphate = 3-(imidazol-4-yl)-2-oxopropyl phosphate + H2O. Its pathway is amino-acid biosynthesis; L-histidine biosynthesis; L-histidine from 5-phospho-alpha-D-ribose 1-diphosphate: step 6/9. The protein is Imidazoleglycerol-phosphate dehydratase of Thermotoga neapolitana (strain ATCC 49049 / DSM 4359 / NBRC 107923 / NS-E).